The sequence spans 400 residues: MTQFASPVLHSLLDTDAYKLHMQQAVFHHYYDVHVAAEFRCRGDDLLGIYADAIREQIQAMQHLRLQDDEYQWLSALPFFKADYLNWLREFRFNPEQVTVSNDNGKLDIRLSGPWREVILWEVPLLAVISEMVHRYRSPQADVAQALDTLESKLVDFSALTAGLDMSRFHLMDFGTRRRFSREVQETIVKRLQQESWFVGTSNYDLARRLSLTPMGTQAHEWFQAHQQISPDLANSQRAALAAWLEEYPDQLGIALTDCITMDAFLRDFGVEFASRYQGLRHDSGDPVEWGEKAIAHYEKLGIDPQSKTLVFSDNLDLRKAVELYRHFSSRVQLSFGIGTRLTCDIPQVKPLNIVIKLVECNGKPVAKLSDSPGKTICHDKAFVRALRKAFDLPHIKKAS.

A Phosphohistidine; by autocatalysis modification is found at His220.

It belongs to the NAPRTase family. Transiently phosphorylated on a His residue during the reaction cycle. Phosphorylation strongly increases the affinity for substrates and increases the rate of nicotinate D-ribonucleotide production. Dephosphorylation regenerates the low-affinity form of the enzyme, leading to product release.

It catalyses the reaction nicotinate + 5-phospho-alpha-D-ribose 1-diphosphate + ATP + H2O = nicotinate beta-D-ribonucleotide + ADP + phosphate + diphosphate. The protein operates within cofactor biosynthesis; NAD(+) biosynthesis; nicotinate D-ribonucleotide from nicotinate: step 1/1. Its function is as follows. Catalyzes the synthesis of beta-nicotinate D-ribonucleotide from nicotinate and 5-phospho-D-ribose 1-phosphate at the expense of ATP. The polypeptide is Nicotinate phosphoribosyltransferase (Shigella sonnei (strain Ss046)).